A 231-amino-acid chain; its full sequence is 7-cyano-7-deazaguanine synthase (231 aa).

Residue 7–17 participates in ATP binding; it reads LSSGLDSVAAL. Cys195, Cys203, Cys206, and Cys209 together coordinate Zn(2+).

The protein belongs to the QueC family. Zn(2+) is required as a cofactor.

The catalysed reaction is 7-carboxy-7-deazaguanine + NH4(+) + ATP = 7-cyano-7-deazaguanine + ADP + phosphate + H2O + H(+). It functions in the pathway purine metabolism; 7-cyano-7-deazaguanine biosynthesis. Its function is as follows. Catalyzes the ATP-dependent conversion of 7-carboxy-7-deazaguanine (CDG) to 7-cyano-7-deazaguanine (preQ(0)). This Methanosarcina barkeri (strain Fusaro / DSM 804) protein is 7-cyano-7-deazaguanine synthase.